The chain runs to 94 residues: Citrate lyase acyl carrier protein (94 aa).

S14 is subject to O-(phosphoribosyl dephospho-coenzyme A)serine.

This sequence belongs to the CitD family. Oligomer with a subunit composition of (alpha,beta,gamma)6.

The protein localises to the cytoplasm. Covalent carrier of the coenzyme of citrate lyase. The polypeptide is Citrate lyase acyl carrier protein (Halothermothrix orenii (strain H 168 / OCM 544 / DSM 9562)).